The primary structure comprises 352 residues: Sphingosine 1-phosphate receptor 2 (352 aa).

At 1-34 (MGGLYSEYLNPEKVQEHYNYTKETLDMQETPSRK) the chain is on the extracellular side. Asn-19 carries N-linked (GlcNAc...) asparagine glycosylation. Residues 35–59 (VASAFIIILCCAIVVENLLVLIAVA) form a helical membrane-spanning segment. Residues 60 to 66 (RNSKFHS) are Cytoplasmic-facing. A helical membrane pass occupies residues 67-95 (AMYLFLGNLAASDLLAGVAFVANTLLSGP). Residues 96-109 (VTLSLTPLQWFARE) lie on the Extracellular side of the membrane. Residues 110–128 (GSAFITLSASVFSLLAIAI) form a helical membrane-spanning segment. Residues 129–147 (ERQVAIAKVKLYGSDKSCR) lie on the Cytoplasmic side of the membrane. Residues 148–173 (MLMLIGASWLISLILGGLPILGWNCL) traverse the membrane as a helical segment. The Extracellular portion of the chain corresponds to 174–189 (DHLEACSTVLPLYAKH). A helical membrane pass occupies residues 190 to 210 (YVLCVVTIFSVILLAIVALYV). Residues 211-233 (RIYFVVRSSHADVAGPQTLALLK) lie on the Cytoplasmic side of the membrane. The helical transmembrane segment at 234 to 255 (TVTIVLGVFIICWLPAFSILLL) threads the bilayer. Over 256-271 (DSTCPVRACPVLYKAH) the chain is Extracellular. A helical transmembrane segment spans residues 272 to 292 (YFFAFATLNSLLNPVIYTWRS). Topologically, residues 293–352 (RDLRREVLRPLLCWRQGKGATGRRGGNPGHRLLPLRSSSSLERGLHMPTSPTFLEGNTVV) are cytoplasmic. Cys-305 is lipidated: S-palmitoyl cysteine.

Belongs to the G-protein coupled receptor 1 family. In terms of tissue distribution, expressed in all developing tissues with highest levels detected in primitive, transformed cells. Relative abundance: lung &gt; kidney = skin = gut &gt; spleen &gt; brain &gt; liver.

The protein resides in the cell membrane. In terms of biological role, receptor for the lysosphingolipid sphingosine 1-phosphate (S1P). S1P is a bioactive lysophospholipid that elicits diverse physiological effects on most types of cells and tissues. Receptor for the chemokine-like protein FAM19A5. Mediates the inhibitory effect of FAM19A5 on vascular smooth muscle cell proliferation and migration. In lymphoid follicles, couples the binding of S1P to the activation of GNA13 and downstream inhibition of AKT activation leading to suppression of germinal center (GC) B cell growth and migration outside the GC niche. The protein is Sphingosine 1-phosphate receptor 2 (S1pr2) of Rattus norvegicus (Rat).